The sequence spans 389 residues: Alanine racemase TOXG (389 aa).

N6-(pyridoxal phosphate)lysine is present on Lys235.

This sequence belongs to the threonine aldolase family. The cofactor is pyridoxal 5'-phosphate.

The catalysed reaction is L-alanine = D-alanine. It participates in mycotoxin biosynthesis; HC-toxin biosynthesis. In terms of biological role, alanine racemase, part of the diffuse TOX2 gene cluster that mediates the biosynthesis of the HC-toxin, cyclic tetrapeptide of structure cyclo(D-Pro-L-Ala-D-Ala-L-Aeo), where Aeo stands for 2-amino-9,10-epoxi-8-oxodecanoic acid. HC-toxin is a determinant of specificity and virulence in the interaction between the producing fungus and its host, maize. TOXG catalyzes the conversion of L-alanine into D-alanine, an essential precursor for the production of the major forms of HC-toxin by the non-ribosomal peptide synthetase HTS1. This Cochliobolus carbonum (Maize leaf spot fungus) protein is Alanine racemase TOXG.